Here is a 278-residue protein sequence, read N- to C-terminus: MALVEIFKAILLGIVEGITEWLPISSTGHMILVDEFIKLNMSAAFMEMFFVVIQLGAILAVVLLYWKKLNPFTFDRGVSVKQETIEMWFKIIVSCIPAGVIGLLWDDVFNALFYNYQTVAVMLIIFGILFIVIENYNKGKRPRVNHLSQITYTTAFMIGIFQLIAAIFPGTSRSGATIVGGLLLGVSRTVAAEFTFFLAIPVMFGASALKLLKFGFNFTGPELMILLIGMVVAFIVSVISIKFLMGYIKKNDFKIFGWYRIILGVIVLLYFSARTIIG.

The next 8 helical transmembrane spans lie at 2-22, 44-64, 85-105, 113-133, 150-170, 189-209, 223-243, and 253-273; these read ALVE…TEWL, AFME…VVLL, IEMW…GLLW, FYNY…FIVI, ITYT…IFPG, TVAA…ASAL, LMIL…SIKF, and FKIF…YFSA.

Belongs to the UppP family.

It is found in the cell membrane. It catalyses the reaction di-trans,octa-cis-undecaprenyl diphosphate + H2O = di-trans,octa-cis-undecaprenyl phosphate + phosphate + H(+). Catalyzes the dephosphorylation of undecaprenyl diphosphate (UPP). Confers resistance to bacitracin. The polypeptide is Undecaprenyl-diphosphatase (Desulfitobacterium hafniense (strain DSM 10664 / DCB-2)).